The following is a 318-amino-acid chain: Ribose-phosphate pyrophosphokinase 1 (318 aa).

Residue 96–101 (RQDKKD) participates in ATP binding. 4 residues coordinate Mg(2+): aspartate 128, histidine 130, aspartate 139, and aspartate 143. Residue histidine 130 coordinates ATP. A binding of phosphoribosylpyrophosphate region spans residues 212 to 227 (KDRVAILVDDMADTCG).

The protein belongs to the ribose-phosphate pyrophosphokinase family. As to quaternary structure, homodimer. The active form is probably a hexamer composed of 3 homodimers. Mg(2+) is required as a cofactor.

It catalyses the reaction D-ribose 5-phosphate + ATP = 5-phospho-alpha-D-ribose 1-diphosphate + AMP + H(+). Its pathway is metabolic intermediate biosynthesis; 5-phospho-alpha-D-ribose 1-diphosphate biosynthesis; 5-phospho-alpha-D-ribose 1-diphosphate from D-ribose 5-phosphate (route I): step 1/1. Its activity is regulated as follows. Activated by magnesium and inorganic phosphate. In terms of biological role, catalyzes the synthesis of phosphoribosylpyrophosphate (PRPP) that is essential for nucleotide synthesis. This Bos taurus (Bovine) protein is Ribose-phosphate pyrophosphokinase 1 (PRPS1).